Reading from the N-terminus, the 649-residue chain is Acetyl-coenzyme A synthetase (649 aa).

Residues 189-192 (RGGK), Thr-311, and Asn-335 each bind CoA. Residues 387 to 389 (GEP), 411 to 416 (DTWWQT), Asp-500, and Arg-515 each bind ATP. A CoA-binding site is contributed by Ser-523. Arg-526 is an ATP binding site. Positions 537, 539, and 542 each coordinate Mg(2+). Residue Arg-584 participates in CoA binding. Lys-609 carries the post-translational modification N6-acetyllysine.

It belongs to the ATP-dependent AMP-binding enzyme family. Requires Mg(2+) as cofactor. In terms of processing, acetylated. Deacetylation by the SIR2-homolog deacetylase activates the enzyme.

It carries out the reaction acetate + ATP + CoA = acetyl-CoA + AMP + diphosphate. In terms of biological role, catalyzes the conversion of acetate into acetyl-CoA (AcCoA), an essential intermediate at the junction of anabolic and catabolic pathways. AcsA undergoes a two-step reaction. In the first half reaction, AcsA combines acetate with ATP to form acetyl-adenylate (AcAMP) intermediate. In the second half reaction, it can then transfer the acetyl group from AcAMP to the sulfhydryl group of CoA, forming the product AcCoA. The sequence is that of Acetyl-coenzyme A synthetase from Sinorhizobium fredii (strain NBRC 101917 / NGR234).